Here is a 466-residue protein sequence, read N- to C-terminus: Probable Xaa-Pro aminopeptidase pepP (466 aa).

Mn(2+) is bound by residues Asp-264, Asp-275, Glu-398, and Glu-438.

It belongs to the peptidase M24B family. The cofactor is Mn(2+).

It catalyses the reaction Release of any N-terminal amino acid, including proline, that is linked to proline, even from a dipeptide or tripeptide.. Functionally, catalyzes the removal of a penultimate prolyl residue from the N-termini of peptides. This is Probable Xaa-Pro aminopeptidase pepP (pepP) from Aspergillus clavatus (strain ATCC 1007 / CBS 513.65 / DSM 816 / NCTC 3887 / NRRL 1 / QM 1276 / 107).